The sequence spans 512 residues: NADH-quinone oxidoreductase subunit N (512 aa).

The next 14 membrane-spanning stretches (helical) occupy residues 32-52 (VLPA…SVLF), 57-77 (FIIV…AVFY), 97-117 (VLSF…AAIV), 126-146 (IEFP…TLMT), 151-171 (FILV…LIGM), 186-206 (FLLG…LFGG), 231-251 (IGLV…PYHA), 264-284 (VTGY…LILY), 296-316 (WAWL…LLAL), 324-344 (MLAY…SAGI), 348-368 (VLFY…ILAY), 392-412 (AIAI…GGFW), 431-451 (ILLI…LRIG), and 473-493 (VGVT…WFLL).

The protein belongs to the complex I subunit 2 family. In terms of assembly, NDH-1 is composed of 14 different subunits. Subunits NuoA, H, J, K, L, M, N constitute the membrane sector of the complex.

The protein localises to the cell inner membrane. It carries out the reaction a quinone + NADH + 5 H(+)(in) = a quinol + NAD(+) + 4 H(+)(out). Functionally, NDH-1 shuttles electrons from NADH, via FMN and iron-sulfur (Fe-S) centers, to quinones in the respiratory chain. The immediate electron acceptor for the enzyme in this species is believed to be ubiquinone. Couples the redox reaction to proton translocation (for every two electrons transferred, four hydrogen ions are translocated across the cytoplasmic membrane), and thus conserves the redox energy in a proton gradient. The polypeptide is NADH-quinone oxidoreductase subunit N (Leptospira interrogans serogroup Icterohaemorrhagiae serovar Lai (strain 56601)).